We begin with the raw amino-acid sequence, 251 residues long: Phosphomannomutase (251 aa).

Asp-18 (nucleophile) is an active-site residue. Mg(2+)-binding residues include Asp-18 and Asp-20. Catalysis depends on Asp-20, which acts as the Proton donor/acceptor. Residues Arg-27, Arg-129, Arg-140, Arg-147, Ser-185, and Asp-187 each contribute to the alpha-D-mannose 1-phosphate site. Positions 213, 225, 227, and 230 each coordinate Mg(2+).

Belongs to the eukaryotic PMM family. In terms of assembly, homodimer. The cofactor is Mg(2+).

It is found in the cytoplasm. It carries out the reaction alpha-D-mannose 1-phosphate = D-mannose 6-phosphate. It participates in nucleotide-sugar biosynthesis; GDP-alpha-D-mannose biosynthesis; alpha-D-mannose 1-phosphate from D-fructose 6-phosphate: step 2/2. Catalyzes the interconversion of mannose-6-phosphate to mannose-1-phosphate, the precursor for the synthesis of GDP-mannose. GDP-mannose is an essential sugar nucleotide for the synthesis of D-mannose-containing cell wall polysaccharides (galactomannans and glucomannans), glycolipids, glycoproteins and the antioxidant L-ascorbate. In Galdieria sulphuraria (Red alga), this protein is Phosphomannomutase.